The sequence spans 357 residues: UDP-N-acetylglucosamine--N-acetylmuramyl-(pentapeptide) pyrophosphoryl-undecaprenol N-acetylglucosamine transferase (357 aa).

Residues 10 to 12 (TGG), asparagine 124, serine 189, isoleucine 244, and glutamine 289 contribute to the UDP-N-acetyl-alpha-D-glucosamine site.

The protein belongs to the glycosyltransferase 28 family. MurG subfamily.

The protein localises to the cell membrane. The enzyme catalyses Mur2Ac(oyl-L-Ala-gamma-D-Glu-L-Lys-D-Ala-D-Ala)-di-trans,octa-cis-undecaprenyl diphosphate + UDP-N-acetyl-alpha-D-glucosamine = beta-D-GlcNAc-(1-&gt;4)-Mur2Ac(oyl-L-Ala-gamma-D-Glu-L-Lys-D-Ala-D-Ala)-di-trans,octa-cis-undecaprenyl diphosphate + UDP + H(+). The protein operates within cell wall biogenesis; peptidoglycan biosynthesis. In terms of biological role, cell wall formation. Catalyzes the transfer of a GlcNAc subunit on undecaprenyl-pyrophosphoryl-MurNAc-pentapeptide (lipid intermediate I) to form undecaprenyl-pyrophosphoryl-MurNAc-(pentapeptide)GlcNAc (lipid intermediate II). This is UDP-N-acetylglucosamine--N-acetylmuramyl-(pentapeptide) pyrophosphoryl-undecaprenol N-acetylglucosamine transferase from Lactococcus lactis subsp. lactis (strain IL1403) (Streptococcus lactis).